The chain runs to 633 residues: tRNA uridine 5-carboxymethylaminomethyl modification enzyme MnmG (633 aa).

FAD is bound by residues 15–20, I127, and S182; that span reads GAGHAG. 276 to 290 is an NAD(+) binding site; it reads GPRYCPSIEDKIVRF. Residue Q373 participates in FAD binding.

The protein belongs to the MnmG family. Homodimer. Heterotetramer of two MnmE and two MnmG subunits. FAD is required as a cofactor.

The protein localises to the cytoplasm. NAD-binding protein involved in the addition of a carboxymethylaminomethyl (cmnm) group at the wobble position (U34) of certain tRNAs, forming tRNA-cmnm(5)s(2)U34. The chain is tRNA uridine 5-carboxymethylaminomethyl modification enzyme MnmG from Streptococcus agalactiae serotype Ia (strain ATCC 27591 / A909 / CDC SS700).